We begin with the raw amino-acid sequence, 208 residues long: Pyridoxine/pyridoxamine 5'-phosphate oxidase (208 aa).

FMN is bound by residues 55 to 60, 70 to 71, K76, K77, and Q99; these read RMVLLK and YT. K60 contacts substrate. Y117, R121, and S125 together coordinate substrate. FMN is bound by residues 134–135 and W179; that span reads QS. 185–187 is a substrate binding site; it reads RLH. R189 lines the FMN pocket.

The protein belongs to the pyridoxamine 5'-phosphate oxidase family. As to quaternary structure, homodimer. It depends on FMN as a cofactor.

It catalyses the reaction pyridoxamine 5'-phosphate + O2 + H2O = pyridoxal 5'-phosphate + H2O2 + NH4(+). The enzyme catalyses pyridoxine 5'-phosphate + O2 = pyridoxal 5'-phosphate + H2O2. It functions in the pathway cofactor metabolism; pyridoxal 5'-phosphate salvage; pyridoxal 5'-phosphate from pyridoxamine 5'-phosphate: step 1/1. The protein operates within cofactor metabolism; pyridoxal 5'-phosphate salvage; pyridoxal 5'-phosphate from pyridoxine 5'-phosphate: step 1/1. Catalyzes the oxidation of either pyridoxine 5'-phosphate (PNP) or pyridoxamine 5'-phosphate (PMP) into pyridoxal 5'-phosphate (PLP). This Brucella abortus biovar 1 (strain 9-941) protein is Pyridoxine/pyridoxamine 5'-phosphate oxidase.